The following is a 686-amino-acid chain: ATP-dependent zinc metalloprotease FtsH 2 (686 aa).

At 1–11 (MKKNIKDIFKN) the chain is on the cytoplasmic side. The chain crosses the membrane as a helical span at residues 12–32 (FNIFWFCFIFLLLSLLYCLIM). At 33 to 178 (MEISHQHDNN…LQRIPYQPYF (146 aa)) the chain is on the extracellular side. Residues 179–199 (GFAPFISAVNICILIIIFYFI) traverse the membrane as a helical segment. Residues 200-686 (YNSIEKTSAQ…QKSEKEDCNK (487 aa)) are Cytoplasmic-facing. Position 272–279 (272–279 (GPPGVGKT)) interacts with ATP. His493 is a Zn(2+) binding site. Residue Glu494 is part of the active site. Residues His497 and Asp569 each coordinate Zn(2+).

It in the central section; belongs to the AAA ATPase family. The protein in the C-terminal section; belongs to the peptidase M41 family. As to quaternary structure, homohexamer. Zn(2+) is required as a cofactor.

It localises to the cell membrane. Its function is as follows. Acts as a processive, ATP-dependent zinc metallopeptidase for both cytoplasmic and membrane proteins. Plays a role in the quality control of integral membrane proteins. This chain is ATP-dependent zinc metalloprotease FtsH 2, found in Phytoplasma mali (strain AT).